The chain runs to 594 residues: Aspartate--tRNA(Asp/Asn) ligase (594 aa).

Glutamate 175 serves as a coordination point for L-aspartate. Residues 199-202 are aspartate; that stretch reads QLFK. Arginine 221 is an L-aspartate binding site. ATP contacts are provided by residues 221 to 223 and glutamine 230; that span reads RDE. Residue histidine 446 participates in L-aspartate binding. Residue glutamate 491 participates in ATP binding. L-aspartate is bound at residue arginine 498. An ATP-binding site is contributed by 543–546; sequence GLDR.

Belongs to the class-II aminoacyl-tRNA synthetase family. Type 1 subfamily. In terms of assembly, homodimer.

Its subcellular location is the cytoplasm. The catalysed reaction is tRNA(Asx) + L-aspartate + ATP = L-aspartyl-tRNA(Asx) + AMP + diphosphate. Its function is as follows. Aspartyl-tRNA synthetase with relaxed tRNA specificity since it is able to aspartylate not only its cognate tRNA(Asp) but also tRNA(Asn). Reaction proceeds in two steps: L-aspartate is first activated by ATP to form Asp-AMP and then transferred to the acceptor end of tRNA(Asp/Asn). This Thermodesulfovibrio yellowstonii (strain ATCC 51303 / DSM 11347 / YP87) protein is Aspartate--tRNA(Asp/Asn) ligase.